A 269-amino-acid polypeptide reads, in one-letter code: 1-(5-phosphoribosyl)-5-[(5-phosphoribosylamino)methylideneamino] imidazole-4-carboxamide isomerase (269 aa).

The active-site Proton acceptor is the Asp10. The Proton donor role is filled by Asp132.

Belongs to the HisA/HisF family.

Its subcellular location is the cytoplasm. It carries out the reaction 1-(5-phospho-beta-D-ribosyl)-5-[(5-phospho-beta-D-ribosylamino)methylideneamino]imidazole-4-carboxamide = 5-[(5-phospho-1-deoxy-D-ribulos-1-ylimino)methylamino]-1-(5-phospho-beta-D-ribosyl)imidazole-4-carboxamide. It functions in the pathway amino-acid biosynthesis; L-histidine biosynthesis; L-histidine from 5-phospho-alpha-D-ribose 1-diphosphate: step 4/9. This chain is 1-(5-phosphoribosyl)-5-[(5-phosphoribosylamino)methylideneamino] imidazole-4-carboxamide isomerase, found in Xylella fastidiosa (strain Temecula1 / ATCC 700964).